The primary structure comprises 498 residues: Protein disulfide-isomerase (498 aa).

A signal peptide spans 1–23 (MASFRGSIWYCIFVLSLIAVAIS). 2 consecutive Thioredoxin domains span residues 24 to 143 (AAES…KQSG) and 339 to 484 (YLKA…KNRD). An N-linked (GlcNAc...) asparagine glycan is attached at Asn-41. Residues Cys-61, Cys-64, Cys-406, and Cys-409 each act as nucleophile in the active site. Cystine bridges form between Cys-61–Cys-64 and Cys-406–Cys-409. The Prevents secretion from ER signature appears at 495-498 (KDEL).

This sequence belongs to the protein disulfide isomerase family.

It is found in the endoplasmic reticulum lumen. It carries out the reaction Catalyzes the rearrangement of -S-S- bonds in proteins.. Functionally, participates in the folding of proteins containing disulfide bonds, may be involved in glycosylation, prolyl hydroxylation and triglyceride transfer. In Ricinus communis (Castor bean), this protein is Protein disulfide-isomerase.